The chain runs to 237 residues: Dihydroceramide fatty acyl 2-hydroxylase FAH2 (237 aa).

The next 2 helical transmembrane spans lie at 54–74 and 77–97; these read VWWA…SISA and GLTF…WTLL. Zn(2+) is bound by residues His-102, His-107, His-123, His-126, and His-127. 2 helical membrane passes run 134–154 and 156–176; these read LRLV…WKLL and LLAT…GYVM. 5 residues coordinate Zn(2+): His-181, His-185, His-201, His-204, and His-205.

Belongs to the sterol desaturase family. As to quaternary structure, interacts with CYTB5-A, CYTB5-B, CYTB5-C and CYTB5-D. It depends on Zn(2+) as a cofactor. As to expression, expressed in leaves, roots, flowers and seeds.

It localises to the endoplasmic reticulum membrane. It catalyses the reaction an N-(1,2-saturated acyl)sphinganine + 2 Fe(II)-[cytochrome b5] + O2 + 2 H(+) = an N-[(2'R)-hydroxyacyl]sphinganine + 2 Fe(III)-[cytochrome b5] + H2O. In terms of biological role, fatty acid 2-hydroxylase involved in the alpha-hydroxylation of the long-chain fatty acid (LCFA) palmitic acid. Probably involved in the resistance response to oxidative stress. The sequence is that of Dihydroceramide fatty acyl 2-hydroxylase FAH2 from Arabidopsis thaliana (Mouse-ear cress).